Here is a 331-residue protein sequence, read N- to C-terminus: Nucleotide sugar transporter SLC35B4 (331 aa).

The next 11 helical transmembrane spans lie at alanine 4 to leucine 24, glycine 30 to phenylalanine 50, proline 59 to valine 79, leucine 92 to leucine 112, serine 117 to methionine 137, glycine 153 to methionine 173, alanine 201 to phenylalanine 221, isoleucine 229 to threonine 249, tyrosine 251 to leucine 267, threonine 268 to phenylalanine 288, and proline 291 to threonine 311. A Mediates endoplasmic reticulum retention motif is present at residues lysine 326–asparagine 331.

This sequence belongs to the nucleotide-sugar transporter family. SLC35B subfamily.

The protein resides in the endoplasmic reticulum membrane. It carries out the reaction UDP-N-acetyl-alpha-D-glucosamine(in) + UDP-alpha-D-glucuronate(out) = UDP-N-acetyl-alpha-D-glucosamine(out) + UDP-alpha-D-glucuronate(in). It catalyses the reaction UDP-alpha-D-xylose(in) + UDP-alpha-D-glucuronate(out) = UDP-alpha-D-xylose(out) + UDP-alpha-D-glucuronate(in). Its function is as follows. Antiporter that transports nucleotide sugars across the endoplasmic reticulum (ER) membrane in exchange for another nucleotide sugar. May couple UDP-alpha-D-glucuronate (UDP-GlcA) or UDP-alpha-D-xylose (UDP-Xyl) efflux to UDP-alpha-D-glucuronate (UDP-GlcA) influx into the ER lumen, which in turn stimulates glucuronidation and excretion of endobiotics and xenobiotics. Functionally, has UDP-GlcA:UDP-GlcNAc antiporter activity. In Homo sapiens (Human), this protein is Nucleotide sugar transporter SLC35B4 (SLC35B4).